The primary structure comprises 325 residues: ATP phosphoribosyltransferase (325 aa).

Belongs to the ATP phosphoribosyltransferase family. Long subfamily. It depends on Mg(2+) as a cofactor.

The protein resides in the cytoplasm. It carries out the reaction 1-(5-phospho-beta-D-ribosyl)-ATP + diphosphate = 5-phospho-alpha-D-ribose 1-diphosphate + ATP. The protein operates within amino-acid biosynthesis; L-histidine biosynthesis; L-histidine from 5-phospho-alpha-D-ribose 1-diphosphate: step 1/9. With respect to regulation, feedback inhibited by histidine. Catalyzes the condensation of ATP and 5-phosphoribose 1-diphosphate to form N'-(5'-phosphoribosyl)-ATP (PR-ATP). Has a crucial role in the pathway because the rate of histidine biosynthesis seems to be controlled primarily by regulation of HisG enzymatic activity. The sequence is that of ATP phosphoribosyltransferase from Bradyrhizobium diazoefficiens (strain JCM 10833 / BCRC 13528 / IAM 13628 / NBRC 14792 / USDA 110).